A 324-amino-acid chain; its full sequence is tRNA (cytidine(32)/guanosine(34)-2'-O)-methyltransferase (324 aa).

Gly-53, Trp-55, Asp-75, Asp-91, and Asp-116 together coordinate S-adenosyl-L-methionine. Lys-156 serves as the catalytic Proton acceptor. The tract at residues 221–240 (DFNQLDGPTRVIVPFVACGD) is required for binding to WDR6.

Belongs to the class I-like SAM-binding methyltransferase superfamily. RNA methyltransferase RlmE family. TRM7 subfamily. As to quaternary structure, interacts with WDR6; the interaction is direct, and required for 2'-O-methylation of position 34 in substrate tRNAs.

The protein localises to the cytoplasm. Its subcellular location is the nucleus. The enzyme catalyses cytidine(32)/guanosine(34) in tRNA + 2 S-adenosyl-L-methionine = 2'-O-methylcytidine(32)/2'-O-methylguanosine(34) in tRNA + 2 S-adenosyl-L-homocysteine + 2 H(+). Its function is as follows. Methylates the 2'-O-ribose of nucleotides at positions 32 and 34 of the tRNA anticodon loop of substrate tRNAs. Requisite for faithful cytoplasmic translation. Requires THADA for methylation of the cytidine at position 32 of the anticodon loop of substrate tRNAs. Requires WDR6 for methylation of the nucleotide at position 34 of the anticodon loop of substrate tRNAs. Promotes translation efficiency of the UUU codon. Plays a role in neurogenesis. Required for expression of genes involved in neurogenesis and mitochondrial translation and energy generation. Requisite for RNA-mediated gene silencing. May modify position 32 in tRNA(Arg(ACG)), tRNA(Gln(CUG)), tRNA(Leu(UAA)), tRNA(Leu(UAG)), tRNA(Leu(AAG)), tRNA(Leu(CAG)), tRNA(Phe(GAA)), tRNA(Trp(CCA)) and tRNA(Val(AAC)), and position 34 in tRNA(Phe(GAA)), tRNA(Leu(CAA)), tRNA(Leu(UAA)), tRNA(Sec(UCA)), and tRNA(Trp(CCA)). The chain is tRNA (cytidine(32)/guanosine(34)-2'-O)-methyltransferase from Mus musculus (Mouse).